Reading from the N-terminus, the 364-residue chain is Aminomethyltransferase (364 aa).

It belongs to the GcvT family. The glycine cleavage system is composed of four proteins: P, T, L and H.

The catalysed reaction is N(6)-[(R)-S(8)-aminomethyldihydrolipoyl]-L-lysyl-[protein] + (6S)-5,6,7,8-tetrahydrofolate = N(6)-[(R)-dihydrolipoyl]-L-lysyl-[protein] + (6R)-5,10-methylene-5,6,7,8-tetrahydrofolate + NH4(+). The glycine cleavage system catalyzes the degradation of glycine. The chain is Aminomethyltransferase from Shewanella denitrificans (strain OS217 / ATCC BAA-1090 / DSM 15013).